The primary structure comprises 887 residues: Endoglucanase 1 (887 aa).

The N-terminal stretch at 1–55 (MRLVNSLGRRKILLILAVIVAFSTVLLFAKLWGRKTSSTLDEVGSKTHGDLTAEN) is a signal peptide. Residues 40-66 (LDEVGSKTHGDLTAENKNGGYLPEEEI) form a disordered region. A compositionally biased stretch (basic and acidic residues) spans 43–53 (VGSKTHGDLTA). Positions 56 to 518 (KNGGYLPEEE…AKMYKLYGGS (463 aa)) are catalytic. D131 acts as the Nucleophile in catalysis. Residues 441-460 (ENPPKRPHHRTAHGSWADSQ) are disordered. Residues H448, D486, and E495 contribute to the active site. Residues 529–684 (VPEDEIFVEA…GVLVFGREPG (156 aa)) enclose the CBM3 1 domain. The tract at residues 684–730 (GSASKSTSKDNGLSKATPTVKTESQPTAKHTQNPASDFKTPANQNSV) is disordered. Residues 686 to 729 (ASKSTSKDNGLSKATPTVKTESQPTAKHTQNPASDFKTPANQNS) are compositionally biased toward polar residues. The CBM3 2 domain maps to 736-887 (IKGEVVLQYA…SNKLVYGKEP (152 aa)).

The protein belongs to the glycosyl hydrolase 9 (cellulase E) family.

It catalyses the reaction Endohydrolysis of (1-&gt;4)-beta-D-glucosidic linkages in cellulose, lichenin and cereal beta-D-glucans.. It functions in the pathway glycan metabolism; cellulose degradation. Functionally, this enzyme catalyzes the endohydrolysis of 1,4-beta-glucosidic linkages in cellulose, lichenin and cereal beta-D-glucans. Principally active against barley beta-glucan. In Acetivibrio thermocellus (strain ATCC 27405 / DSM 1237 / JCM 9322 / NBRC 103400 / NCIMB 10682 / NRRL B-4536 / VPI 7372) (Clostridium thermocellum), this protein is Endoglucanase 1 (celI).